Here is a 345-residue protein sequence, read N- to C-terminus: Anthranilate phosphoribosyltransferase (345 aa).

5-phospho-alpha-D-ribose 1-diphosphate contacts are provided by residues glycine 84, 87 to 88, threonine 92, 94 to 97, 112 to 120, and serine 124; these read GD, NIST, and KHGNRSVSS. Glycine 84 contacts anthranilate. Residue serine 96 coordinates Mg(2+). Residue asparagine 115 participates in anthranilate binding. Arginine 170 is a binding site for anthranilate. Mg(2+) is bound by residues aspartate 229 and glutamate 230.

The protein belongs to the anthranilate phosphoribosyltransferase family. As to quaternary structure, homodimer. The cofactor is Mg(2+).

The catalysed reaction is N-(5-phospho-beta-D-ribosyl)anthranilate + diphosphate = 5-phospho-alpha-D-ribose 1-diphosphate + anthranilate. The protein operates within amino-acid biosynthesis; L-tryptophan biosynthesis; L-tryptophan from chorismate: step 2/5. Functionally, catalyzes the transfer of the phosphoribosyl group of 5-phosphorylribose-1-pyrophosphate (PRPP) to anthranilate to yield N-(5'-phosphoribosyl)-anthranilate (PRA). The polypeptide is Anthranilate phosphoribosyltransferase (Xanthomonas campestris pv. campestris (strain 8004)).